The sequence spans 120 residues: NAD(P)H-quinone oxidoreductase subunit 3 (120 aa).

The next 3 helical transmembrane spans lie at 6–26, 64–84, and 89–109; these read GYDA…LALV, MFAL…PWAV, and LGLL…VALA.

Belongs to the complex I subunit 3 family. NDH-1 can be composed of about 15 different subunits; different subcomplexes with different compositions have been identified which probably have different functions.

The protein resides in the cellular thylakoid membrane. The enzyme catalyses a plastoquinone + NADH + (n+1) H(+)(in) = a plastoquinol + NAD(+) + n H(+)(out). It catalyses the reaction a plastoquinone + NADPH + (n+1) H(+)(in) = a plastoquinol + NADP(+) + n H(+)(out). Functionally, NDH-1 shuttles electrons from an unknown electron donor, via FMN and iron-sulfur (Fe-S) centers, to quinones in the respiratory and/or the photosynthetic chain. The immediate electron acceptor for the enzyme in this species is believed to be plastoquinone. Couples the redox reaction to proton translocation, and thus conserves the redox energy in a proton gradient. Cyanobacterial NDH-1 also plays a role in inorganic carbon-concentration. This Synechococcus sp. (strain CC9902) protein is NAD(P)H-quinone oxidoreductase subunit 3.